The sequence spans 946 residues: MKPLSSPLQQYWQTVVERLPEPLAEESLSAQAKSVLTFSDFVQDSISAHPEWLTELESQPPQADEWQHYVAWLQEALSNVSDEAGLMRELRLFRRRIMVRIAWAQTLALVTEESILQQLSYLAETLIVAARDWLYDACCREWGTPCNAQGEAQPLLILGMGKLGGGELNFSSDIDLIFAWPEHGCTQGGRRELDNAQFFTRMGQRLIKVLDQPTQDGFVYRVDMRLRPFGESGPLVLSFAALEDYYQEQGRDWERYAMVKARIMGDSEGVYANELRAMLRPFVFRRYIDFSVIQSLRNMKGMIAREVRRRGLTDNIKLGAGGIREIEFIVQVFQLIRGGREPSLQSRSLLPTLSAIAELHLLSENDAEQLRVAYLFLRRLENLLQSINDEQTQTLPSDELNRARLAWAMDFADWPQLTGALTAHMTNVRRVFNELIGDDESETQEESLSEQWRELWQDALQEDDTTPVLAHLSEDDRKQVLTLIADFRKELDKRTIGPRGRQVLDHLMPHLLSDVCAREDAAVTLSRITALLVGIVTRTTYLELLSEFPAALKHLISLCAASPMIASQLARYPLLLDELLDPNTLYQPTATDAYRDELRQYLLRVPEDDEEQQLEALRQFKQAQLLRIAAADIAGTLPVMKVSDHLTWLAEAMIDAVVQQAWVQMVARYGKPNHLNEREGRGFAVVGYGKLGGWELGYSSDLDLIFLHDCPMDAMTDGEREIDGRQFYLRLAQRIMHLFSTRTSSGILYEVDARLRPSGAAGMLVTSAEAFADYQKNEAWTWEHQALVRARVVYGDPQLTAHFDAVRREIMTLPREGKTLQTEVREMREKMRAHLGNKHRDRFDIKADEGGITDIEFITQYLVLRYAHEKPKLTRWSDNVRILELLAQNDIMEEQEAMALTRAYTTLRDELHHLALQELPGHVSEDCFTAERELVRASWQKWLVEE.

The segment at 1–440 is adenylyl removase; sequence MKPLSSPLQQ…VFNELIGDDE (440 aa). Positions 449–946 are adenylyl transferase; the sequence is SEQWRELWQD…ASWQKWLVEE (498 aa).

This sequence belongs to the GlnE family. Mg(2+) is required as a cofactor.

It catalyses the reaction [glutamine synthetase]-O(4)-(5'-adenylyl)-L-tyrosine + phosphate = [glutamine synthetase]-L-tyrosine + ADP. It carries out the reaction [glutamine synthetase]-L-tyrosine + ATP = [glutamine synthetase]-O(4)-(5'-adenylyl)-L-tyrosine + diphosphate. Functionally, involved in the regulation of glutamine synthetase GlnA, a key enzyme in the process to assimilate ammonia. When cellular nitrogen levels are high, the C-terminal adenylyl transferase (AT) inactivates GlnA by covalent transfer of an adenylyl group from ATP to specific tyrosine residue of GlnA, thus reducing its activity. Conversely, when nitrogen levels are low, the N-terminal adenylyl removase (AR) activates GlnA by removing the adenylyl group by phosphorolysis, increasing its activity. The regulatory region of GlnE binds the signal transduction protein PII (GlnB) which indicates the nitrogen status of the cell. This is Bifunctional glutamine synthetase adenylyltransferase/adenylyl-removing enzyme from Escherichia coli O7:K1 (strain IAI39 / ExPEC).